The chain runs to 203 residues: NADH-quinone oxidoreductase subunit C (203 aa).

Belongs to the complex I 30 kDa subunit family. NDH-1 is composed of 14 different subunits. Subunits NuoB, C, D, E, F, and G constitute the peripheral sector of the complex.

It localises to the cell inner membrane. The catalysed reaction is a quinone + NADH + 5 H(+)(in) = a quinol + NAD(+) + 4 H(+)(out). Its function is as follows. NDH-1 shuttles electrons from NADH, via FMN and iron-sulfur (Fe-S) centers, to quinones in the respiratory chain. The immediate electron acceptor for the enzyme in this species is believed to be ubiquinone. Couples the redox reaction to proton translocation (for every two electrons transferred, four hydrogen ions are translocated across the cytoplasmic membrane), and thus conserves the redox energy in a proton gradient. The sequence is that of NADH-quinone oxidoreductase subunit C from Delftia acidovorans (strain DSM 14801 / SPH-1).